The primary structure comprises 335 residues: tRNA-dihydrouridine(20/20a) synthase (335 aa).

FMN-binding positions include 20–22 and Gln72; that span reads PML. The active-site Proton donor is the Cys102. Residues Lys141, His173, 213–215, and 235–236 contribute to the FMN site; these read NGG and GR.

Belongs to the Dus family. DusA subfamily. The cofactor is FMN.

The catalysed reaction is 5,6-dihydrouridine(20) in tRNA + NADP(+) = uridine(20) in tRNA + NADPH + H(+). The enzyme catalyses 5,6-dihydrouridine(20) in tRNA + NAD(+) = uridine(20) in tRNA + NADH + H(+). It carries out the reaction 5,6-dihydrouridine(20a) in tRNA + NADP(+) = uridine(20a) in tRNA + NADPH + H(+). It catalyses the reaction 5,6-dihydrouridine(20a) in tRNA + NAD(+) = uridine(20a) in tRNA + NADH + H(+). Its function is as follows. Catalyzes the synthesis of 5,6-dihydrouridine (D), a modified base found in the D-loop of most tRNAs, via the reduction of the C5-C6 double bond in target uridines. Specifically modifies U20 and U20a in tRNAs. This Shewanella oneidensis (strain ATCC 700550 / JCM 31522 / CIP 106686 / LMG 19005 / NCIMB 14063 / MR-1) protein is tRNA-dihydrouridine(20/20a) synthase.